A 79-amino-acid chain; its full sequence is U-myrmeciitoxin(01)-Mg9a (79 aa).

An N-terminal signal peptide occupies residues 1–21 (MKLSCLLLTLAIIFVLTIVHA). Positions 22 to 48 (PNVEAKALANPESDAIGFADAVGEADP) are excised as a propeptide. Glutamine 78 is modified (glutamine amide).

Expressed by the venom gland.

It is found in the secreted. May have antimicrobial properties, like most ant linear peptides. The polypeptide is U-myrmeciitoxin(01)-Mg9a (Myrmecia gulosa (Red bulldog ant)).